Here is a 248-residue protein sequence, read N- to C-terminus: Ribonuclease PH (248 aa).

Residues R86 and 124–126 each bind phosphate; that span reads GTR.

This sequence belongs to the RNase PH family. As to quaternary structure, homohexameric ring arranged as a trimer of dimers.

It carries out the reaction tRNA(n+1) + phosphate = tRNA(n) + a ribonucleoside 5'-diphosphate. Phosphorolytic 3'-5' exoribonuclease that plays an important role in tRNA 3'-end maturation. Removes nucleotide residues following the 3'-CCA terminus of tRNAs; can also add nucleotides to the ends of RNA molecules by using nucleoside diphosphates as substrates, but this may not be physiologically important. Probably plays a role in initiation of 16S rRNA degradation (leading to ribosome degradation) during starvation. This chain is Ribonuclease PH, found in Clostridium perfringens (strain 13 / Type A).